The chain runs to 308 residues: Pseudouridine-5'-phosphate glycosidase (308 aa).

The active-site Proton donor is glutamate 28. Residues lysine 89 and valine 109 each coordinate substrate. Aspartate 141 contributes to the Mn(2+) binding site. Position 143–145 (143–145 (SAD)) interacts with substrate. Catalysis depends on lysine 162, which acts as the Nucleophile.

This sequence belongs to the pseudouridine-5'-phosphate glycosidase family. As to quaternary structure, homotrimer. Mn(2+) is required as a cofactor.

The catalysed reaction is D-ribose 5-phosphate + uracil = psi-UMP + H2O. Catalyzes the reversible cleavage of pseudouridine 5'-phosphate (PsiMP) to ribose 5-phosphate and uracil. Functions biologically in the cleavage direction, as part of a pseudouridine degradation pathway. The sequence is that of Pseudouridine-5'-phosphate glycosidase from Brachyspira hyodysenteriae (strain ATCC 49526 / WA1).